The following is a 190-amino-acid chain: Holliday junction branch migration complex subunit RuvA (190 aa).

The domain I stretch occupies residues 1–64 (MIGKLTGTLL…EDAQLLYGFG (64 aa)). The tract at residues 65–143 (THSERQAFRE…ADTGAQSLFV (79 aa)) is domain II. Residues 144–148 (NNDQN) form a flexible linker region. Residues 148–190 (NDIVQALMALGYSDKDAAAALKKLPPDVGVTEGIKLALKALAK) are domain III.

Belongs to the RuvA family. Homotetramer. Forms an RuvA(8)-RuvB(12)-Holliday junction (HJ) complex. HJ DNA is sandwiched between 2 RuvA tetramers; dsDNA enters through RuvA and exits via RuvB. An RuvB hexamer assembles on each DNA strand where it exits the tetramer. Each RuvB hexamer is contacted by two RuvA subunits (via domain III) on 2 adjacent RuvB subunits; this complex drives branch migration. In the full resolvosome a probable DNA-RuvA(4)-RuvB(12)-RuvC(2) complex forms which resolves the HJ.

It is found in the cytoplasm. In terms of biological role, the RuvA-RuvB-RuvC complex processes Holliday junction (HJ) DNA during genetic recombination and DNA repair, while the RuvA-RuvB complex plays an important role in the rescue of blocked DNA replication forks via replication fork reversal (RFR). RuvA specifically binds to HJ cruciform DNA, conferring on it an open structure. The RuvB hexamer acts as an ATP-dependent pump, pulling dsDNA into and through the RuvAB complex. HJ branch migration allows RuvC to scan DNA until it finds its consensus sequence, where it cleaves and resolves the cruciform DNA. In Delftia acidovorans (strain DSM 14801 / SPH-1), this protein is Holliday junction branch migration complex subunit RuvA.